The following is a 547-amino-acid chain: Dihydroxy-acid dehydratase (547 aa).

D78 lines the Mg(2+) pocket. C119 contributes to the [2Fe-2S] cluster binding site. D120 and K121 together coordinate Mg(2+). K121 carries the N6-carboxylysine modification. C191 is a binding site for [2Fe-2S] cluster. E439 serves as a coordination point for Mg(2+). S464 acts as the Proton acceptor in catalysis.

It belongs to the IlvD/Edd family. In terms of assembly, homodimer. It depends on [2Fe-2S] cluster as a cofactor. Requires Mg(2+) as cofactor.

The enzyme catalyses (2R)-2,3-dihydroxy-3-methylbutanoate = 3-methyl-2-oxobutanoate + H2O. The catalysed reaction is (2R,3R)-2,3-dihydroxy-3-methylpentanoate = (S)-3-methyl-2-oxopentanoate + H2O. It participates in amino-acid biosynthesis; L-isoleucine biosynthesis; L-isoleucine from 2-oxobutanoate: step 3/4. The protein operates within amino-acid biosynthesis; L-valine biosynthesis; L-valine from pyruvate: step 3/4. Functions in the biosynthesis of branched-chain amino acids. Catalyzes the dehydration of (2R,3R)-2,3-dihydroxy-3-methylpentanoate (2,3-dihydroxy-3-methylvalerate) into 2-oxo-3-methylpentanoate (2-oxo-3-methylvalerate) and of (2R)-2,3-dihydroxy-3-methylbutanoate (2,3-dihydroxyisovalerate) into 2-oxo-3-methylbutanoate (2-oxoisovalerate), the penultimate precursor to L-isoleucine and L-valine, respectively. The sequence is that of Dihydroxy-acid dehydratase from Methanospirillum hungatei JF-1 (strain ATCC 27890 / DSM 864 / NBRC 100397 / JF-1).